The chain runs to 281 residues: Small ribosomal subunit protein uS2 (281 aa).

Residues arginine 229–glutamate 281 form a disordered region. Positions glutamate 255–alanine 275 are enriched in low complexity.

Belongs to the universal ribosomal protein uS2 family.

The protein is Small ribosomal subunit protein uS2 of Bifidobacterium longum subsp. infantis (strain ATCC 15697 / DSM 20088 / JCM 1222 / NCTC 11817 / S12).